Reading from the N-terminus, the 93-residue chain is Large ribosomal subunit protein eL42 (93 aa).

Zn(2+) contacts are provided by Cys11, Cys14, Cys71, and Cys74. Residues 11 to 74 (CRYCGKHTLH…VNIRFRCTEC (64 aa)) form a C4-type zinc finger.

This sequence belongs to the eukaryotic ribosomal protein eL42 family. As to quaternary structure, part of the 50S ribosomal subunit. Zn(2+) serves as cofactor.

Binds to the 23S rRNA. In Archaeoglobus fulgidus (strain ATCC 49558 / DSM 4304 / JCM 9628 / NBRC 100126 / VC-16), this protein is Large ribosomal subunit protein eL42.